The chain runs to 383 residues: uncharacterized protein (383 aa).

Transmembrane regions (helical) follow at residues 49 to 69 (VDLL…GCVA) and 347 to 367 (LLGG…PVAG).

To M.tuberculosis Rv0874c.

It localises to the cell membrane. This is an uncharacterized protein from Mycobacterium tuberculosis (strain CDC 1551 / Oshkosh).